A 534-amino-acid polypeptide reads, in one-letter code: Peptide chain release factor 3 (534 aa).

The 270-residue stretch at 9–278 (ARRRTFAIIS…FFIEHAPPPQ (270 aa)) folds into the tr-type G domain. Residues 18 to 25 (SHPDAGKT), 86 to 90 (DTPGH), and 140 to 143 (NKLD) each bind GTP.

It belongs to the TRAFAC class translation factor GTPase superfamily. Classic translation factor GTPase family. PrfC subfamily.

Its subcellular location is the cytoplasm. Functionally, increases the formation of ribosomal termination complexes and stimulates activities of RF-1 and RF-2. It binds guanine nucleotides and has strong preference for UGA stop codons. It may interact directly with the ribosome. The stimulation of RF-1 and RF-2 is significantly reduced by GTP and GDP, but not by GMP. In Xanthomonas oryzae pv. oryzae (strain PXO99A), this protein is Peptide chain release factor 3.